The chain runs to 240 residues: MSELSYRRILLKLSGEALMGDGDYGIDPKVINRLAHEVIEAQQAGAQVALVIGGGNIFRGAGLAASGMDRVTGDHMGMLATVINALAMQDALEKLGAKVRVMSAIKINDVCEDFIRRRAIRHLEKGRIAIFAAGTGNPFFTTDSGAALRAIEIGADLLLKATKVDGVYDKDPKKHTDAVRYDSLTYDQVILQGLEVMDTAAFALARDSDLPLRIFGMSEPGVLLRILHGEQIGTLVQGRS.

12–15 (KLSG) provides a ligand contact to ATP. Glycine 54 lines the UMP pocket. Glycine 55 and arginine 59 together coordinate ATP. UMP-binding positions include aspartate 74 and 135–142 (TGNPFFTT). ATP is bound by residues threonine 162, tyrosine 168, and aspartate 171.

It belongs to the UMP kinase family. In terms of assembly, homohexamer.

The protein resides in the cytoplasm. It carries out the reaction UMP + ATP = UDP + ADP. The protein operates within pyrimidine metabolism; CTP biosynthesis via de novo pathway; UDP from UMP (UMPK route): step 1/1. With respect to regulation, inhibited by UTP. Its function is as follows. Catalyzes the reversible phosphorylation of UMP to UDP. This is Uridylate kinase from Xanthomonas euvesicatoria pv. vesicatoria (strain 85-10) (Xanthomonas campestris pv. vesicatoria).